The primary structure comprises 606 residues: MAVTFEDVTIIFTWEEWKFLDSSQKRLYREVMWENYTNVMSVENWNESYKSQEEKFRYLEYENFSYWQGWWNAGAQMYENQNYGETVQGTDSKDLTQQDRSQCQEWLILSTQVPGYGNYELTFESKSLRNLKYKNFMPWQSLETKTTQDYGREIYMSGSHGFQGGRYRLGISRKNLSMEKEQKLIVQHSYIPVEEALPQYVGVICQEDLLRDSMEEKYCGCNKCKGIYYWNSRCVFHKRNQPGENLCQCSICKACFSQRSDLYRHPRNHIGKKLYGCDEVDGNFHQSSGVHFHQRVHIGEVPYSCNACGKSFSQISSLHNHQRVHTEEKFYKIECDKDLSRNSLLHIHQRLHIGEKPFKCNQCGKSFNRSSVLHVHQRVHTGEKPYKCDECGKGFSQSSNLRIHQLVHTGEKSYKCEDCGKGFTQRSNLQIHQRVHTGEKPYKCDDCGKDFSHSSDLRIHQRVHTGEKPYTCPECGKGFSKSSKLHTHQRVHTGEKPYKCEECGKGFSQRSHLLIHQRVHTGEKPYKCHDCGKGFSHSSNLHIHQRVHTGEKPYQCAKCGKGFSHSSALRIHQRVHAGEKPYKCREYYKGFDHNSHLHNNHRRGNL.

Residues 3–83 (VTFEDVTIIF…GAQMYENQNY (81 aa)) form the KRAB domain. The C2H2-type 1; degenerate zinc-finger motif lies at 275–297 (YGCDEVDGNFHQSSGVHFHQRVH). Residues 303-325 (YSCNACGKSFSQISSLHNHQRVH) form a C2H2-type 2 zinc finger. A C2H2-type 3; degenerate zinc finger spans residues 330–352 (FYKIECDKDLSRNSLLHIHQRLH). 8 consecutive C2H2-type zinc fingers follow at residues 358–380 (FKCN…QRVH), 386–408 (YKCD…QLVH), 414–436 (YKCE…QRVH), 442–464 (YKCD…QRVH), 470–492 (YTCP…QRVH), 498–520 (YKCE…QRVH), 526–548 (YKCH…QRVH), and 554–576 (YQCA…QRVH).

The protein belongs to the krueppel C2H2-type zinc-finger protein family.

The protein resides in the nucleus. May be involved in transcriptional regulation. This chain is Zinc finger protein 214 (ZNF214), found in Homo sapiens (Human).